The following is a 227-amino-acid chain: Orotidine 5'-phosphate decarboxylase (227 aa).

Substrate-binding positions include Asp-8, Lys-30, 59-68, Thr-118, Arg-178, Gln-187, Gly-207, and Arg-208; that span reads DLKLYDIPNT. Lys-61 (proton donor) is an active-site residue.

This sequence belongs to the OMP decarboxylase family. Type 1 subfamily. In terms of assembly, homodimer.

The enzyme catalyses orotidine 5'-phosphate + H(+) = UMP + CO2. The protein operates within pyrimidine metabolism; UMP biosynthesis via de novo pathway; UMP from orotate: step 2/2. Functionally, catalyzes the decarboxylation of orotidine 5'-monophosphate (OMP) to uridine 5'-monophosphate (UMP). This is Orotidine 5'-phosphate decarboxylase from Sulfurimonas denitrificans (strain ATCC 33889 / DSM 1251) (Thiomicrospira denitrificans (strain ATCC 33889 / DSM 1251)).